Here is a 339-residue protein sequence, read N- to C-terminus: MSLCVGDAGALLLGPWPLTADPQGPLLDQDEESSVLEGSWSPSSSSLSSFSPPASGDAPSELLSLSWQPSDVLLTEQSTAGDVFPGMDWMTEKLDLNDFDLDSLIGSCDSEDSPGSPEDLLACLDSSMDLDLDSLPFGSADLDLPLGLDLPLPEEIKSEPLSPAPSVPSPPEEAPQDEHTEVPVLHPAGIMLSLSPSHIVVLLTPKEEQNISDCSDSDSGISVSGSPAHQSDLEPSSRAKPYSRPDPEASPALKGRVKTSSGAPKVEKKLKKMEQNKTAATRYRQKKRVEQESLNSECSELEKKNRELSEKADSLSREIQYLRDLLEEMRTAKQRKSKR.

Disordered stretches follow at residues 14 to 62 (GPWP…PSEL), 153 to 182 (PEEI…HTEV), and 209 to 313 (QNIS…EKAD). A compositionally biased stretch (low complexity) spans 35–55 (VLEGSWSPSSSSLSSFSPPAS). Pro residues predominate over residues 162 to 173 (SPAPSVPSPPEE). Over residues 211–226 (ISDCSDSDSGISVSGS) the composition is skewed to low complexity. Residues 231-247 (SDLEPSSRAKPYSRPDP) are compositionally biased toward basic and acidic residues. The bZIP domain occupies 266-329 (VEKKLKKMEQ…QYLRDLLEEM (64 aa)). Positions 268 to 288 (KKLKKMEQNKTAATRYRQKKR) are basic motif. The tract at residues 294–322 (LNSECSELEKKNRELSEKADSLSREIQYL) is leucine-zipper. Residues 300–313 (ELEKKNRELSEKAD) show a composition bias toward basic and acidic residues.

Belongs to the bZIP family. In terms of assembly, binds DNA as a homodimer and as a heterodimer.

It localises to the nucleus. Transcription factor that binds the cAMP response element (CRE) (consensus: 5'-GTGACGT[AC][AG]-3') and displays two biological functions, as regulator of metabolic and redox processes under normal cellular conditions, and as master transcription factor during integrated stress response (ISR). Binds to asymmetric CRE's as a heterodimer and to palindromic CRE's as a homodimer. Core effector of the ISR, which is required for adaptation to various stress such as endoplasmic reticulum (ER) stress, amino acid starvation, mitochondrial stress or oxidative stress. During ISR, atf4 translation is induced via an alternative ribosome translation re-initiation mechanism in response to eif2s1/eIF-2-alpha phosphorylation, and stress-induced atf4 acts as a master transcription factor of stress-responsive genes in order to promote cell recovery. Promotes the transcription of genes linked to amino acid sufficiency and resistance to oxidative stress to protect cells against metabolic consequences of ER oxidation. In the absence of stress, atf4 translation is at low levels and it is required for normal metabolic processes such as embryonic lens formation, fetal liver hematopoiesis, bone development and synaptic plasticity. Acts as a regulator of osteoblast differentiation by promoting expression of osteoblast-specific genes. Regulates the circadian expression of the core clock components. Mainly acts as a transcriptional activator in cellular stress adaptation, but it can also act as a transcriptional repressor. The polypeptide is Cyclic AMP-dependent transcription factor ATF-4 (atf4) (Danio rerio (Zebrafish)).